Reading from the N-terminus, the 451-residue chain is Rab GDP-dissociation inhibitor (451 aa).

2 interaction with YPT1 regions span residues 106–112 (RYVDFKQ) and 234–259 (YPMY…TYML).

Belongs to the Rab GDI family. In terms of assembly, interacts with the GDP-bound form of Rab GTPase YPT1. Interacts with YPT10.

It localises to the cytoplasm. Functionally, regulates the GDP/GTP exchange reaction of SEC4 by inhibiting the dissociation of GDP from it, and the subsequent binding of GTP to SEC4. Plays an essential role in the yeast secretory pathway. Extracts GDP-bound YPT7 from vacuolar membranes, antagonizing vacuolar membrane fusion. The protein is Rab GDP-dissociation inhibitor (GDI1) of Saccharomyces cerevisiae (strain ATCC 204508 / S288c) (Baker's yeast).